Consider the following 463-residue polypeptide: MEKALSKTWSDRFDKGLNPFIEKFNASIEFDICLLEEDLDGSIAHARMLGIQGIITKEEALRLENGLQQIRKEASDGLFQPVIADEDVHFAVEKKLIDLIGPVGKKLHTGRSRNDQVGTDLRLWLRKRIDEIDMDLVRLQKSLFLLAEENLYTLIPGYTHLQRAQPLSLAHHLLAYIEMAQRDRNRLKDVRKRVNISPLGAAALAGTSISISRKITSSELHFQGIYSNSLDAVSDRDFVVEFLGASSLIMAHLSRLSEEVILWASEEFAFIQLTDRCATGSSLMPQKKNPDVPELVRGKSGRVFGHLQAMLTMIKGLPLAYNKDFQEDKEAIFDSVKTVKNSLIAISILFEEGLIFRKERLNQAVSSDFSNATDVADYLVAKDIPFREAYQLVGRIVKTSLEEGILLKDFPLERWKTFHKFFEKDIYEKLLPSSVVESRLSAGGTGFERVQEQLLSWREKLFN.

This sequence belongs to the lyase 1 family. Argininosuccinate lyase subfamily.

Its subcellular location is the cytoplasm. The catalysed reaction is 2-(N(omega)-L-arginino)succinate = fumarate + L-arginine. Its pathway is amino-acid biosynthesis; L-arginine biosynthesis; L-arginine from L-ornithine and carbamoyl phosphate: step 3/3. The sequence is that of Argininosuccinate lyase from Prochlorococcus marinus (strain NATL1A).